We begin with the raw amino-acid sequence, 430 residues long: Tyrosine--tRNA ligase (430 aa).

Y32 contributes to the L-tyrosine binding site. Positions 37–46 (PTADSLHIGH) match the 'HIGH' region motif. Residues Y172 and Q176 each coordinate L-tyrosine. Residues 232-236 (KFGKT) carry the 'KMSKS' region motif. An ATP-binding site is contributed by K235. The region spanning 362–430 (ISLVDLLADA…KKSYYLIIVE (69 aa)) is the S4 RNA-binding domain.

It belongs to the class-I aminoacyl-tRNA synthetase family. TyrS type 1 subfamily. Homodimer.

It is found in the cytoplasm. The enzyme catalyses tRNA(Tyr) + L-tyrosine + ATP = L-tyrosyl-tRNA(Tyr) + AMP + diphosphate + H(+). In terms of biological role, catalyzes the attachment of tyrosine to tRNA(Tyr) in a two-step reaction: tyrosine is first activated by ATP to form Tyr-AMP and then transferred to the acceptor end of tRNA(Tyr). In Porphyromonas gingivalis (strain ATCC 33277 / DSM 20709 / CIP 103683 / JCM 12257 / NCTC 11834 / 2561), this protein is Tyrosine--tRNA ligase.